We begin with the raw amino-acid sequence, 352 residues long: Decapping nuclease din1 (352 aa).

Substrate-binding positions include arginine 33 and 93 to 95; that span reads WRG. Glutamate 150 is a binding site for a divalent metal cation. Substrate is bound by residues cysteine 182 and glutamate 199. A divalent metal cation is bound at residue aspartate 201. Phosphoserine is present on serine 218. Residues glutamate 239 and leucine 240 each coordinate a divalent metal cation. Substrate contacts are provided by lysine 241 and glutamine 263.

This sequence belongs to the DXO/Dom3Z family. In terms of assembly, interacts with dhp1/Rat1; the interaction is direct, stabilizes dhp1 protein structure and stimulates its exoribonuclease activity. The interaction also stimulates din1 pyrophosphohydrolase activity, probably by recruiting it to mRNA substrates. It depends on a divalent metal cation as a cofactor.

The protein localises to the nucleus. It carries out the reaction a 5'-end NAD(+)-phospho-ribonucleoside in mRNA + H2O = a 5'-end phospho-ribonucleoside in mRNA + NAD(+) + H(+). The enzyme catalyses a 5'-end (N(7)-methyl 5'-triphosphoguanosine)-ribonucleoside-ribonucleotide in mRNA + H2O = a (N(7)-methyl 5'-triphosphoguanosine)-nucleoside + a 5'-end phospho-ribonucleoside in mRNA + H(+). The catalysed reaction is a 5'-end triphospho-ribonucleoside in mRNA + H2O = a 5'-end phospho-ribonucleoside in mRNA + diphosphate + H(+). Functionally, decapping enzyme for NAD-capped RNAs: specifically hydrolyzes the nicotinamide adenine dinucleotide (NAD) cap from a subset of RNAs by removing the entire NAD moiety from the 5'-end of an NAD-capped RNA. The NAD-cap is present at the 5'-end of some RNAs and snoRNAs. In contrast to the canonical 5'-end N7 methylguanosine (m7G) cap, the NAD cap promotes mRNA decay. Also acts as a non-canonical decapping enzyme that removes the entire cap structure of m7G capped or incompletely capped RNAs and mediates their subsequent degradation. Specifically degrades pre-mRNAs with a defective m7G cap and is part of a pre-mRNA capping quality control. Has decapping activity toward incomplete 5'-end m7G cap mRNAs such as unmethylated 5'-end-capped RNA (cap0), while it has no activity toward 2'-O-ribose methylated m7G cap (cap1). Also possesses RNA 5'-pyrophosphohydrolase activity by hydrolyzing the 5'-end triphosphate to release pyrophosphates. Stimulates exoribonuclease activity of dhp1, allowing it to degrade RNAs with stable secondary structure more effectively. This is Decapping nuclease din1 from Schizosaccharomyces pombe (strain 972 / ATCC 24843) (Fission yeast).